Consider the following 37-residue polypeptide: Cytochrome b6-f complex subunit 5 (37 aa).

Residues 5–25 traverse the membrane as a helical segment; the sequence is LLFGIVLGLIPITLAGLFVTA.

The protein belongs to the PetG family. In terms of assembly, the 4 large subunits of the cytochrome b6-f complex are cytochrome b6, subunit IV (17 kDa polypeptide, PetD), cytochrome f and the Rieske protein, while the 4 small subunits are PetG, PetL, PetM and PetN. The complex functions as a dimer.

It localises to the plastid. It is found in the chloroplast thylakoid membrane. Its function is as follows. Component of the cytochrome b6-f complex, which mediates electron transfer between photosystem II (PSII) and photosystem I (PSI), cyclic electron flow around PSI, and state transitions. PetG is required for either the stability or assembly of the cytochrome b6-f complex. This Lemna minor (Common duckweed) protein is Cytochrome b6-f complex subunit 5.